We begin with the raw amino-acid sequence, 159 residues long: Phosphopantetheine adenylyltransferase (159 aa).

S10 provides a ligand contact to substrate. Residues 10 to 11 (SF) and H18 each bind ATP. The substrate site is built by K42, L77, and K91. ATP contacts are provided by residues 92–94 (GIR), E102, and 126–132 (NAHVSSS).

Belongs to the bacterial CoaD family. As to quaternary structure, homohexamer. Requires Mg(2+) as cofactor.

The protein localises to the cytoplasm. The enzyme catalyses (R)-4'-phosphopantetheine + ATP + H(+) = 3'-dephospho-CoA + diphosphate. The protein operates within cofactor biosynthesis; coenzyme A biosynthesis; CoA from (R)-pantothenate: step 4/5. Its function is as follows. Reversibly transfers an adenylyl group from ATP to 4'-phosphopantetheine, yielding dephospho-CoA (dPCoA) and pyrophosphate. This Leifsonia xyli subsp. xyli (strain CTCB07) protein is Phosphopantetheine adenylyltransferase.